A 191-amino-acid polypeptide reads, in one-letter code: MIDAEGYRLNVGIILSNDEGRVFWARRAGMRSWQFPQGGIKVDEDPDAAMFRELYEEVGLERQYVEIIARTKGWLRYQLPERFIRRRSYPLCIGQKQIWYILRLTGTDANIRLDCSERPEFDRWCWVDYWHPLSDVVYFKREVYRQALSELQRALQAGRPAGAQAVSDAGGTATRQIPVATEPSGPSSSQR.

The Nudix hydrolase domain occupies 6-149; the sequence is GYRLNVGIIL…KREVYRQALS (144 aa). The Nudix box motif lies at 38 to 59; the sequence is GGIKVDEDPDAAMFRELYEEVG. The tract at residues 162–191 is disordered; sequence GAQAVSDAGGTATRQIPVATEPSGPSSSQR.

Belongs to the Nudix hydrolase family. RppH subfamily. A divalent metal cation is required as a cofactor.

Functionally, accelerates the degradation of transcripts by removing pyrophosphate from the 5'-end of triphosphorylated RNA, leading to a more labile monophosphorylated state that can stimulate subsequent ribonuclease cleavage. This chain is RNA pyrophosphohydrolase, found in Methylococcus capsulatus (strain ATCC 33009 / NCIMB 11132 / Bath).